A 219-amino-acid chain; its full sequence is Transcriptional activator protein rep2 (219 aa).

A zinc finger lies at 177–197 (CSKCNTTFNHSTALMMHEATC).

Transcriptional activator which interacts with the mcb binding subunit complex formed by res2 and cdc10. Rep2 is required for the mitotic cell cycle start. The chain is Transcriptional activator protein rep2 (rep2) from Schizosaccharomyces pombe (strain 972 / ATCC 24843) (Fission yeast).